Here is a 225-residue protein sequence, read N- to C-terminus: Protein ERP3 (225 aa).

Positions M1–P23 are cleaved as a signal peptide. Residues L24–S195 lie on the Lumenal side of the membrane. The GOLD domain occupies K33–Y172. Residues E129–R138 show a composition bias toward basic residues. Positions E129–Q149 are disordered. The helical transmembrane segment at I196–I216 threads the bilayer. Topologically, residues F217–V225 are cytoplasmic.

This sequence belongs to the EMP24/GP25L family.

The protein localises to the endoplasmic reticulum membrane. Involved in vesicular protein trafficking. The protein is Protein ERP3 (ERP3) of Saccharomyces cerevisiae (strain ATCC 204508 / S288c) (Baker's yeast).